The chain runs to 1807 residues: Vitellogenin-2 (1807 aa).

A signal peptide spans 1-16 (MWFPVTLLFLAGVAVA). One can recognise a Vitellogenin domain in the interval 24–819 (WETGNEYQYS…LIPKYVYVGV (796 aa)). Cysteine 180 and cysteine 224 are joined by a disulfide. Residues 334–402 (SDSDNRRVRH…SSSSSSEEEN (69 aa)) are disordered. Over residues 346 to 397 (VSQNSEQENSSESSKSSSQSSSSSSSASSSSSSSSSSSSSSSSSSSSSSSSS) the composition is skewed to low complexity. N-linked (GlcNAc...) asparagine glycosylation is found at asparagine 354, asparagine 579, asparagine 635, asparagine 1181, asparagine 1304, asparagine 1373, and asparagine 1506. Residues 1448 to 1636 (QSCTLDKDKV…TYAMTQENCQ (189 aa)) form the VWFD domain. 2 disulfide bridges follow: cysteine 1450–cysteine 1599 and cysteine 1472–cysteine 1635. 2 disordered regions span residues 1635–1655 (CQGP…HEFP) and 1684–1723 (NRNK…KKHN). N-linked (GlcNAc...) asparagine glycosylation occurs at asparagine 1693. Over residues 1700 to 1714 (KKQYQANSQESGSSE) the composition is skewed to polar residues.

It localises to the secreted. Its function is as follows. Precursor of the egg-yolk proteins that are sources of nutrients during embryonic development. In Solenopsis invicta (Red imported fire ant), this protein is Vitellogenin-2.